The primary structure comprises 843 residues: MPLSYQHFRRLLLLDNEAGPLEEELPRLADEDLNHRVAEDLNLQLPNVSIPWTHKVGNFTGLYSSTIPVFNPDWLTPSFPDIHLHQDLIQKCEQFVGPLTTNERRRLKLIMPARFYPKVTKYFPLDKGIKPYYPENVVNHYFKTRHYLHTLWKAGILYKRESTHSASFCGSPYSWEQELQHGSTSLNGEKGHGTEPFCAQSSGILSRPPVGSTIQSKFQQSRLGLQHKQGQLANGKQGRSGRLRSRVHTPTRWPSGVEPSGTGHSDNLATRSTSCFHQSEVRKKANPSLSTSKGHTSTGHAVELNTVPPSTVGSESKGSVFSCWWLQFRNTEPCSDYCLSHIINLLEDWGPCYEHGEHHIRTPKTPSRVTGGVFLVDKNPHNTTESRLVVDFSQFSRGTTRVSWPKFAVPNLQSLTNLLSSNLSWLSLDVSAAFYHLPLHPAAMPHLLVGSSGLSRYVARVSSTSRIYNHQHGTLQNLHHSCSRNLYVSLLLLYQTFGRKLHLYSHPIILGFRKIPMGVGLSPFLLAQFTSAICSVVRRAFPHCLAFSYMDDLVLGAKSVQHLESLYTAVTNFLLSVGIHLNTAKTKWWGYSLHFMGYIIGSWGTLPQEHIVHKIKDCFRKLPVNRPIDWKVCQRIVGLLGFAAPFTQCGYPALMPLYACITAKQAFVFSPTYKAFLCKQYMNLYPVARQRPGLCQVFADATPTGWGLAIGHQRMRGTFVAPLPIHTAELLAACFARSRSGADIIGTDNSVVLSRKYTSFPWLLGCAANWILRGTSFVYVPSALNPADDPSRGRLGLCRPLLRLPFRPTTGRTSLYADSPPVPSHLPARVHFASPLHVAWRPP.

The tract at residues 1–177 (MPLSYQHFRR…FCGSPYSWEQ (177 aa)) is terminal protein domain (TP). Residues 178 to 346 (ELQHGSTSLN…YCLSHIINLL (169 aa)) are spacer. 2 disordered regions span residues 180 to 202 (QHGS…AQSS) and 226 to 315 (QHKQ…VGSE). Residues 239 to 249 (RSGRLRSRVHT) show a composition bias toward basic residues. Composition is skewed to polar residues over residues 262–277 (TGHS…SCFH) and 287–299 (PSLS…TSTG). Residues 347-690 (EDWGPCYEHG…YMNLYPVARQ (344 aa)) are polymerase/reverse transcriptase domain (RT). The 244-residue stretch at 357–600 (EHHIRTPKTP…YSLHFMGYII (244 aa)) folds into the Reverse transcriptase domain. Mg(2+) contacts are provided by D429, D551, and D552.

This sequence belongs to the hepadnaviridae P protein family.

It carries out the reaction DNA(n) + a 2'-deoxyribonucleoside 5'-triphosphate = DNA(n+1) + diphosphate. The enzyme catalyses Endonucleolytic cleavage to 5'-phosphomonoester.. Activated by host HSP70 and HSP40 in vitro to be able to bind the epsilon loop of the pgRNA. Because deletion of the RNase H region renders the protein partly chaperone-independent, the chaperones may be needed indirectly to relieve occlusion of the RNA-binding site by this domain. Inhibited by several reverse-transcriptase inhibitors: Lamivudine, Adefovir and Entecavir. Its function is as follows. Multifunctional enzyme that converts the viral RNA genome into dsDNA in viral cytoplasmic capsids. This enzyme displays a DNA polymerase activity that can copy either DNA or RNA templates, and a ribonuclease H (RNase H) activity that cleaves the RNA strand of RNA-DNA heteroduplexes in a partially processive 3'- to 5'-endonucleasic mode. Neo-synthesized pregenomic RNA (pgRNA) are encapsidated together with the P protein, and reverse-transcribed inside the nucleocapsid. Initiation of reverse-transcription occurs first by binding the epsilon loop on the pgRNA genome, and is initiated by protein priming, thereby the 5'-end of (-)DNA is covalently linked to P protein. Partial (+)DNA is synthesized from the (-)DNA template and generates the relaxed circular DNA (RC-DNA) genome. After budding and infection, the RC-DNA migrates in the nucleus, and is converted into a plasmid-like covalently closed circular DNA (cccDNA). The activity of P protein does not seem to be necessary for cccDNA generation, and is presumably released from (+)DNA by host nuclear DNA repair machinery. The chain is Protein P from Hepatitis B virus genotype H (isolate United States/LAS2523/2002) (HBV-H).